Reading from the N-terminus, the 234-residue chain is Large ribosomal subunit protein uL1 (234 aa).

This sequence belongs to the universal ribosomal protein uL1 family. In terms of assembly, part of the 50S ribosomal subunit.

In terms of biological role, binds directly to 23S rRNA. The L1 stalk is quite mobile in the ribosome, and is involved in E site tRNA release. Protein L1 is also a translational repressor protein, it controls the translation of the L11 operon by binding to its mRNA. The chain is Large ribosomal subunit protein uL1 from Aliivibrio salmonicida (strain LFI1238) (Vibrio salmonicida (strain LFI1238)).